The sequence spans 266 residues: Protein SCO2 homolog, mitochondrial (266 aa).

The transit peptide at 1-41 directs the protein to the mitochondrion; the sequence is MLLLTRSPTAWHRLSQLKPRVLPGTLGGQALHLRSWLLSRQ. Residues 42 to 60 lie on the Mitochondrial matrix side of the membrane; sequence GPAETGGQGQPQGPGLRTR. Residues 61-78 form a helical membrane-spanning segment; it reads LLITGLFGAGLGGAWLAL. The Mitochondrial intermembrane segment spans residues 79–266; sequence RAEKERLQQQ…HMAAFRSVLS (188 aa). The Thioredoxin domain occupies 85–259; sequence LQQQKRTEAL…ISDSVRRHMA (175 aa). Cu cation-binding residues include Cys-133, Cys-137, and His-224. Cys-133 and Cys-137 are disulfide-bonded.

This sequence belongs to the SCO1/2 family. As to quaternary structure, homodimer. Interacts with COA6. Found in a complex with TMEM177, COX20, COA6, MT-CO2/COX2, COX18 and SCO1. Interacts with TMEM177 in a COX20-dependent manner. Interacts with COX20 in a MT-CO2/COX2- and COX18-dependent manner. Interacts with COX16. Ubiquitous.

The protein localises to the mitochondrion inner membrane. Its function is as follows. Copper metallochaperone essential for the synthesis and maturation of cytochrome c oxidase subunit II (MT-CO2/COX2) by facilitating the incorporation of copper into the Cu(A) site of MT-CO2/COX2. Could also act as a thiol-disulfide oxidoreductase to regulate the redox state of the cysteines in SCO1 during maturation of MT-CO2/COX2. The sequence is that of Protein SCO2 homolog, mitochondrial (SCO2) from Homo sapiens (Human).